A 382-amino-acid chain; its full sequence is Layilin (382 aa).

The N-terminal stretch at 1-21 (MRPGTALQAVLLAVLLVGLRA) is a signal peptide. At 22–235 (ATGRLLSASD…SREAALNLAY (214 aa)) the chain is on the extracellular side. The 141-residue stretch at 45 to 185 (TQRPCYKVIY…CNMKNNFICK (141 aa)) folds into the C-type lectin domain. Disulfide bonds link C71/C184 and C150/C176. N117 carries an N-linked (GlcNAc...) asparagine glycan. Residues 236 to 256 (ILIPSIPLLLLLVVTTVVCWV) form a helical membrane-spanning segment. The Cytoplasmic segment spans residues 257 to 382 (WICRKRKREQ…GWVENEIYGY (126 aa)). The interval 266–285 (QPDPSTKKQHTIWPSPHQGN) is disordered. 2 positions are modified to phosphoserine: S286 and S299. Residues 330 to 374 (DYDNMAVNPSESGFVTLVSVESGFVTNDIYEFSPDQMGRSKESGW) are interaction with NF2. Residues 337 to 382 (NPSESGFVTLVSVESGFVTNDIYEFSPDQMGRSKESGWVENEIYGY) form an interaction with TLN1 region. 5 consecutive repeat copies span residues 340–344 (ESGFV), 350–354 (ESGFV), 356–359 (NDIY), 371–375 (ESGWV), and 377–380 (NEIY). The 3 X 5 AA repeats of E-S-G-X-V stretch occupies residues 340 to 375 (ESGFVTLVSVESGFVTNDIYEFSPDQMGRSKESGWV). The segment at 356–380 (NDIYEFSPDQMGRSKESGWVENEIY) is 2 X 4 AA repeats of N-X-I-Y.

In terms of assembly, interacts with NF2, RDX and TLN1.

It is found in the membrane. Receptor for hyaluronate. The polypeptide is Layilin (LAYN) (Homo sapiens (Human)).